Reading from the N-terminus, the 479-residue chain is UDP-glycosyltransferase 71B6 (479 aa).

UDP-alpha-D-glucose is bound by residues Ser275, 342-344 (AEQ), 359-367 (HGGWNSTLE), and 381-384 (YAEQ).

Belongs to the UDP-glycosyltransferase family.

Functionally, glucosyltransferase that glucosylates the (+) enantiomer of abscisic acid ((+)-ABA). Is not active on structural analogs with alterations to the 8'- and 9'- methyl groups. The protein is UDP-glycosyltransferase 71B6 (UGT71B6) of Arabidopsis thaliana (Mouse-ear cress).